The following is a 206-amino-acid chain: UPF0502 protein Acid_1185 (206 aa).

Belongs to the UPF0502 family.

In Solibacter usitatus (strain Ellin6076), this protein is UPF0502 protein Acid_1185.